The sequence spans 1040 residues: Multidrug resistance protein MdtB (1040 aa).

Transmembrane regions (helical) follow at residues 16-36 (FILR…AGLV), 342-362 (DVQF…YLFL), 373-393 (IAVP…GFSV), 396-416 (LTLM…IVVI), 440-460 (IGFT…PLLF), 472-492 (FAVT…TLTP), 537-557 (WITL…YIVI), 865-885 (STIW…GVLY), 888-908 (FIHP…ALLA), 911-931 (ISGS…IGIV), 968-988 (ILMT…STGV), and 1002-1022 (GGLV…YLLF).

Belongs to the resistance-nodulation-cell division (RND) (TC 2.A.6) family. MdtB subfamily. Part of a tripartite efflux system composed of MdtA, MdtB and MdtC. MdtB forms a heteromultimer with MdtC.

Its subcellular location is the cell inner membrane. The protein is Multidrug resistance protein MdtB of Musicola paradisiaca (strain Ech703) (Dickeya paradisiaca).